Reading from the N-terminus, the 399-residue chain is L-methionine gamma-lyase (399 aa).

Pyridoxal 5'-phosphate is bound by residues 59 to 61 (YTR) and 89 to 90 (GM). Residue tyrosine 114 participates in substrate binding. 209 to 211 (SAT) lines the pyridoxal 5'-phosphate pocket. An N6-(pyridoxal phosphate)lysine modification is found at lysine 212. Residue arginine 376 participates in substrate binding.

Belongs to the trans-sulfuration enzymes family. L-methionine gamma-lyase subfamily. As to quaternary structure, homotetramer; dimer of active dimers. Pyridoxal 5'-phosphate is required as a cofactor.

The catalysed reaction is L-methionine + H2O = methanethiol + 2-oxobutanoate + NH4(+). Its function is as follows. Catalyzes the alpha,gamma-elimination of L-methionine to produce methanethiol, 2-oxobutanoate and ammonia. This is L-methionine gamma-lyase from Pseudomonas deceptionensis.